The sequence spans 87 residues: Mitochondrial import inner membrane translocase subunit TIM9 (87 aa).

Met1 is subject to N-acetylmethionine. Residues 35–59 carry the Twin CX3C motif motif; sequence CFTDCVNDFTTSKLTNKEQTCIMKC. Intrachain disulfides connect Cys35-Cys59 and Cys39-Cys55.

Belongs to the small Tim family. Heterohexamer; composed of 3 copies of TIM9 and 3 copies of TIM10, named soluble 70 kDa complex. Associates with the TIM12 component of the TIM22 complex, whose core is composed of TIM18, TIM22 and TIM54. Interacts with the transmembrane regions of multi-pass transmembrane proteins in transit.

It localises to the mitochondrion inner membrane. Its subcellular location is the mitochondrion intermembrane space. Mitochondrial intermembrane chaperone that participates in the import and insertion of multi-pass transmembrane proteins into the mitochondrial inner membrane. Also required for the transfer of beta-barrel precursors from the TOM complex to the sorting and assembly machinery (SAM complex) of the outer membrane. Acts as a chaperone-like protein that protects the hydrophobic precursors from aggregation and guide them through the mitochondrial intermembrane space. Compared to TIM10, it may have a strong structural role. The polypeptide is Mitochondrial import inner membrane translocase subunit TIM9 (TIM9) (Saccharomyces cerevisiae (strain ATCC 204508 / S288c) (Baker's yeast)).